We begin with the raw amino-acid sequence, 1241 residues long: ATP-dependent helicase/nuclease subunit A (1241 aa).

A UvrD-like helicase ATP-binding domain is found at 12 to 485 (SQWTDDQWKA…IDLAKNFRSR (474 aa)). Position 33–40 (33–40 (AAAGSGKT)) interacts with ATP. The 301-residue stretch at 505 to 805 (GEIDYDADAE…RIMTIHKSKG (301 aa)) folds into the UvrD-like helicase C-terminal domain.

It belongs to the helicase family. AddA subfamily. In terms of assembly, heterodimer of AddA and AddB/RexB. Mg(2+) serves as cofactor.

The enzyme catalyses Couples ATP hydrolysis with the unwinding of duplex DNA by translocating in the 3'-5' direction.. It catalyses the reaction ATP + H2O = ADP + phosphate + H(+). In terms of biological role, the heterodimer acts as both an ATP-dependent DNA helicase and an ATP-dependent, dual-direction single-stranded exonuclease. Recognizes the chi site generating a DNA molecule suitable for the initiation of homologous recombination. The AddA nuclease domain is required for chi fragment generation; this subunit has the helicase and 3' -&gt; 5' nuclease activities. The protein is ATP-dependent helicase/nuclease subunit A of Bacillus thuringiensis (strain Al Hakam).